Here is a 66-residue protein sequence, read N- to C-terminus: Large ribosomal subunit protein bL35 (66 aa).

The protein belongs to the bacterial ribosomal protein bL35 family.

This chain is Large ribosomal subunit protein bL35, found in Jannaschia sp. (strain CCS1).